A 495-amino-acid polypeptide reads, in one-letter code: Probable cytosol aminopeptidase (495 aa).

Residues Lys-266 and Asp-271 each coordinate Mn(2+). Lys-278 is an active-site residue. Mn(2+) contacts are provided by Asp-289, Asp-348, and Glu-350. Arg-352 is an active-site residue.

The protein belongs to the peptidase M17 family. Requires Mn(2+) as cofactor.

Its subcellular location is the cytoplasm. The enzyme catalyses Release of an N-terminal amino acid, Xaa-|-Yaa-, in which Xaa is preferably Leu, but may be other amino acids including Pro although not Arg or Lys, and Yaa may be Pro. Amino acid amides and methyl esters are also readily hydrolyzed, but rates on arylamides are exceedingly low.. It carries out the reaction Release of an N-terminal amino acid, preferentially leucine, but not glutamic or aspartic acids.. Functionally, presumably involved in the processing and regular turnover of intracellular proteins. Catalyzes the removal of unsubstituted N-terminal amino acids from various peptides. The protein is Probable cytosol aminopeptidase of Pseudomonas aeruginosa (strain LESB58).